Consider the following 437-residue polypeptide: Arginine biosynthesis bifunctional protein ArgJ, mitochondrial (437 aa).

6 residues coordinate substrate: T173, K200, T211, E297, N432, and S437. Catalysis depends on T211, which acts as the Nucleophile.

This sequence belongs to the ArgJ family. In terms of assembly, heterodimer of an alpha and a beta chain. In terms of processing, the alpha and beta chains are autoproteolytically processed from a single precursor protein within the mitochondrion.

The protein resides in the mitochondrion matrix. It catalyses the reaction N(2)-acetyl-L-ornithine + L-glutamate = N-acetyl-L-glutamate + L-ornithine. It carries out the reaction L-glutamate + acetyl-CoA = N-acetyl-L-glutamate + CoA + H(+). Its pathway is amino-acid biosynthesis; L-arginine biosynthesis; L-ornithine and N-acetyl-L-glutamate from L-glutamate and N(2)-acetyl-L-ornithine (cyclic): step 1/1. It participates in amino-acid biosynthesis; L-arginine biosynthesis; N(2)-acetyl-L-ornithine from L-glutamate: step 1/4. In terms of biological role, catalyzes two activities which are involved in the cyclic version of arginine biosynthesis: the synthesis of acetylglutamate from glutamate and acetyl-CoA, and of ornithine by transacetylation between acetylornithine and glutamate. This is Arginine biosynthesis bifunctional protein ArgJ, mitochondrial from Zygosaccharomyces rouxii (strain ATCC 2623 / CBS 732 / NBRC 1130 / NCYC 568 / NRRL Y-229).